Reading from the N-terminus, the 639-residue chain is 3-hydroxybenzoate 4-monooxygenase (639 aa).

Residues 34-64, Gln73, Val166, Asn212, 269-271, Tyr317, Asp349, and Ser365 contribute to the FAD site; these read DVLI…IVEQ and RFY.

Belongs to the PheA/TfdB FAD monooxygenase family. As to quaternary structure, homodimer. FAD is required as a cofactor.

It carries out the reaction 3-hydroxybenzoate + NADPH + O2 + H(+) = 3,4-dihydroxybenzoate + NADP(+) + H2O. Converts 3-hydroxybenzoate (m-hydroxybenzoate), and to a lesser extent p-hydroxybenzoate, to 3,4-dihydroxybenzoate (protocatechuate). Also acts on a number of analogs of 3-hydroxybenzoate substituted in the 2, 4, 5 and 6 positions. The chain is 3-hydroxybenzoate 4-monooxygenase (mobA) from Comamonas testosteroni (Pseudomonas testosteroni).